The chain runs to 622 residues: Low affinity potassium transport system protein Kup (622 aa).

12 helical membrane passes run 9-29 (LSAV…TSPL), 46-66 (PDVV…VVSV), 101-121 (ILVV…VITP), 137-157 (PALD…LFVI), 165-185 (VGKL…LLGL), 213-233 (VSFF…ALYA), 247-267 (WFTV…ALLL), 276-296 (PFFL…ATLA), 337-357 (IYIP…IIGF), 363-383 (LAAA…ILFC), 395-415 (FLVV…FSAN), and 416-436 (VLKL…MFII).

The protein belongs to the HAK/KUP transporter (TC 2.A.72) family.

It is found in the cell inner membrane. The enzyme catalyses K(+)(in) + H(+)(in) = K(+)(out) + H(+)(out). Its function is as follows. Responsible for the low-affinity transport of potassium into the cell. Likely operates as a K(+):H(+) symporter. In Yersinia pestis (strain Pestoides F), this protein is Low affinity potassium transport system protein Kup.